A 262-amino-acid chain; its full sequence is MKIHDFKIKKQEQKKISMLTCYDYPSACIVAESNIDCVLVGDSVAMAVHGYPTTIMATIEMMELHTQAVARGLGKQFLITDLPFLGHKSSQGHTVENVKRLLQAGAQAVKIEGADKDTCQTISHLVNAGIPVMGHIGLTPQSIHQLGGYKIQGKNSEQAETLLQQATTLEQAGCFAVVIECVPQDLAKTITDSLVIPTIGIGAGPGTDGQVLVWHDMLGLQTSFNPKFVKKYFRAKDHFIEALNSYVQQVQQMHFPANEHSF.

Mg(2+) is bound by residues aspartate 42 and aspartate 81. Residues 42–43 (DS), aspartate 81, and lysine 110 contribute to the 3-methyl-2-oxobutanoate site. Residue glutamate 112 participates in Mg(2+) binding. Glutamate 180 serves as the catalytic Proton acceptor.

It belongs to the PanB family. As to quaternary structure, homodecamer; pentamer of dimers. The cofactor is Mg(2+).

The protein resides in the cytoplasm. The enzyme catalyses 3-methyl-2-oxobutanoate + (6R)-5,10-methylene-5,6,7,8-tetrahydrofolate + H2O = 2-dehydropantoate + (6S)-5,6,7,8-tetrahydrofolate. Its pathway is cofactor biosynthesis; (R)-pantothenate biosynthesis; (R)-pantoate from 3-methyl-2-oxobutanoate: step 1/2. Its function is as follows. Catalyzes the reversible reaction in which hydroxymethyl group from 5,10-methylenetetrahydrofolate is transferred onto alpha-ketoisovalerate to form ketopantoate. In Legionella pneumophila (strain Lens), this protein is 3-methyl-2-oxobutanoate hydroxymethyltransferase.